The following is a 490-amino-acid chain: Nicotinate phosphoribosyltransferase (490 aa).

At histidine 206 the chain carries Phosphohistidine.

The protein belongs to the NAPRTase family. Transiently phosphorylated on a His residue during the reaction cycle. Phosphorylation strongly increases the affinity for substrates and increases the rate of nicotinate D-ribonucleotide production. Dephosphorylation regenerates the low-affinity form of the enzyme, leading to product release.

It catalyses the reaction nicotinate + 5-phospho-alpha-D-ribose 1-diphosphate + ATP + H2O = nicotinate beta-D-ribonucleotide + ADP + phosphate + diphosphate. It functions in the pathway cofactor biosynthesis; NAD(+) biosynthesis; nicotinate D-ribonucleotide from nicotinate: step 1/1. Functionally, catalyzes the synthesis of beta-nicotinate D-ribonucleotide from nicotinate and 5-phospho-D-ribose 1-phosphate at the expense of ATP. The protein is Nicotinate phosphoribosyltransferase (pncB) of Bacillus subtilis (strain 168).